The primary structure comprises 192 residues: Adenylate kinase (192 aa).

10-18 (GVPGVGGTT) contacts ATP.

This sequence belongs to the archaeal adenylate kinase family. Monomer.

The protein localises to the cytoplasm. The enzyme catalyses AMP + ATP = 2 ADP. This is Adenylate kinase from Methanococcus maripaludis (strain C7 / ATCC BAA-1331).